Consider the following 287-residue polypeptide: MSFTARQIGAPNTLDYRVFIEQNGKPVSPFHDIPLYANEEKTVLNMIVEVPRWTNAKLEISKEEKLNPILQDTKKGKLRFVRNCFPHHGYIHNYGAFPQTWEDPNQVHPETKAKGDNDPLDVCEIGEQVGYVGQVKQVKVLGVMALLDEGETDWKIIVIDVNDPLASKLNDIEDVETHLPGLLRATNEWFRIYKIPDGKPENQFAFSGECKNKKYAEEIINECSEAWEKLIKGETADSKGISLDNTTLSSTQTFSEAAASGVPPASVQPAAPIDKSVDKWFFISGAH.

Arginine 79 is a binding site for diphosphate. Mg(2+) is bound by residues aspartate 116, aspartate 121, and aspartate 153.

The protein belongs to the PPase family. Mg(2+) is required as a cofactor.

It is found in the cytoplasm. The enzyme catalyses diphosphate + H2O = 2 phosphate + H(+). The polypeptide is Inorganic pyrophosphatase (IPP1) (Debaryomyces hansenii (strain ATCC 36239 / CBS 767 / BCRC 21394 / JCM 1990 / NBRC 0083 / IGC 2968) (Yeast)).